Reading from the N-terminus, the 87-residue chain is uncharacterized protein (87 aa).

The protein to A.fulgidus AF_1348 and AF_1363.

This is an uncharacterized protein from Archaeoglobus fulgidus (strain ATCC 49558 / DSM 4304 / JCM 9628 / NBRC 100126 / VC-16).